The primary structure comprises 747 residues: Elongation factor G, mitochondrial (747 aa).

Residues 1-16 constitute a mitochondrion transit peptide; that stretch reads MSLIMRVLNGNLSLRL. Positions 42 to 319 constitute a tr-type G domain; the sequence is ERIRNIGISA…AIIDYLPNPG (278 aa). Residues 51–58, 118–122, and 172–175 contribute to the GTP site; these read AHIDSGKT, DTPGH, and NKLD.

It belongs to the TRAFAC class translation factor GTPase superfamily. Classic translation factor GTPase family. EF-G/EF-2 subfamily.

It localises to the mitochondrion. Its pathway is protein biosynthesis; polypeptide chain elongation. In terms of biological role, mitochondrial GTPase that catalyzes the GTP-dependent ribosomal translocation step during translation elongation. During this step, the ribosome changes from the pre-translocational (PRE) to the post-translocational (POST) state as the newly formed A-site-bound peptidyl-tRNA and P-site-bound deacylated tRNA move to the P and E sites, respectively. Catalyzes the coordinated movement of the two tRNA molecules, the mRNA and conformational changes in the ribosome. Essential during development as it acts as a retrograde signal from mitochondria to the nucleus to slow down cell proliferation if mitochondrial energy output is low. This Drosophila grimshawi (Hawaiian fruit fly) protein is Elongation factor G, mitochondrial.